Reading from the N-terminus, the 508-residue chain is Photosystem II CP47 reaction center protein (508 aa).

Transmembrane regions (helical) follow at residues 21-36 (SVHI…WAGS), 101-115 (IVFS…IWHW), 140-156 (GIHL…FGAF), 203-218 (IAAG…FHLS), 237-252 (VLSS…AFVV), and 457-472 (SFAL…HGAR).

This sequence belongs to the PsbB/PsbC family. PsbB subfamily. As to quaternary structure, PSII is composed of 1 copy each of membrane proteins PsbA, PsbB, PsbC, PsbD, PsbE, PsbF, PsbH, PsbI, PsbJ, PsbK, PsbL, PsbM, PsbT, PsbX, PsbY, PsbZ, Psb30/Ycf12, at least 3 peripheral proteins of the oxygen-evolving complex and a large number of cofactors. It forms dimeric complexes. It depends on Binds multiple chlorophylls. PSII binds additional chlorophylls, carotenoids and specific lipids. as a cofactor.

Its subcellular location is the plastid. The protein resides in the chloroplast thylakoid membrane. Functionally, one of the components of the core complex of photosystem II (PSII). It binds chlorophyll and helps catalyze the primary light-induced photochemical processes of PSII. PSII is a light-driven water:plastoquinone oxidoreductase, using light energy to abstract electrons from H(2)O, generating O(2) and a proton gradient subsequently used for ATP formation. The chain is Photosystem II CP47 reaction center protein from Olimarabidopsis pumila (Dwarf rocket).